Reading from the N-terminus, the 484-residue chain is Zinc metalloproteinase/disintegrin PMMP-2 (484 aa).

The first 20 residues, 1 to 20 (MIQVLLVTICLAVFPYQGSS), serve as a signal peptide directing secretion. Positions 21 to 190 (IILESGNVDD…KASQLNLTPL (170 aa)) are excised as a propeptide. The Peptidase M12B domain maps to 197–395 (RYVKLAIVVD…YNPQCILNAP (199 aa)). Asn-239 is a glycosylation site (N-linked (GlcNAc...) asparagine). 3 cysteine pairs are disulfide-bonded: Cys-308/Cys-390, Cys-352/Cys-374, and Cys-354/Cys-357. Residue His-333 coordinates Zn(2+). Glu-334 is an active-site residue. Residues His-337 and His-343 each coordinate Zn(2+). A propeptide spanning residues 396-413 (LRTDTVSTPVSGNEFLEA) is cleaved from the precursor. Residues 403-484 (TPVSGNEFLE…ADCPRNGLYG (82 aa)) enclose the Disintegrin domain. 6 disulfide bridges follow: Cys-417–Cys-432, Cys-419–Cys-427, Cys-426–Cys-449, Cys-440–Cys-446, Cys-445–Cys-470, and Cys-458–Cys-477. The short motif at 462 to 464 (RGD) is the Cell attachment site element.

The protein belongs to the venom metalloproteinase (M12B) family. P-II subfamily. P-IIa sub-subfamily. In terms of assembly, monomer. The cofactor is Zn(2+). In terms of tissue distribution, expressed by the venom gland.

Its subcellular location is the secreted. In terms of biological role, impairs hemostasis in the envenomed animal. Inhibits platelet aggregation induced by ADP, thrombin, platelet-activating factor and collagen. Acts by inhibiting fibrinogen interaction with platelet receptors GPIIb/GPIIIa (ITGA2B/ITGB3). The chain is Zinc metalloproteinase/disintegrin PMMP-2 from Protobothrops mucrosquamatus (Taiwan habu).